We begin with the raw amino-acid sequence, 78 residues long: MSRVCQVTGKRPTVGNNRSHAKNATRRRFLPNLQSHRFWVEGEKRFVTLRLTPKGMRIIDKLGIEAVLADIRARGEKV.

Residues 1–25 are disordered; that stretch reads MSRVCQVTGKRPTVGNNRSHAKNAT.

It belongs to the bacterial ribosomal protein bL28 family.

The chain is Large ribosomal subunit protein bL28 from Tolumonas auensis (strain DSM 9187 / NBRC 110442 / TA 4).